The primary structure comprises 858 residues: Bifunctional uridylyltransferase/uridylyl-removing enzyme (858 aa).

Residues Met1 to Leu324 form a uridylyltransferase region. The tract at residues Ser325–Leu681 is uridylyl-removing. In terms of domain architecture, HD spans Val443 to Leu565. ACT domains are found at residues Gln682 to Gly763 and Ile790 to Val858.

The protein belongs to the GlnD family. The cofactor is Mg(2+).

It carries out the reaction [protein-PII]-L-tyrosine + UTP = [protein-PII]-uridylyl-L-tyrosine + diphosphate. It catalyses the reaction [protein-PII]-uridylyl-L-tyrosine + H2O = [protein-PII]-L-tyrosine + UMP + H(+). Its activity is regulated as follows. Uridylyltransferase (UTase) activity is inhibited by glutamine, while glutamine activates uridylyl-removing (UR) activity. Modifies, by uridylylation and deuridylylation, the PII regulatory proteins (GlnB and homologs), in response to the nitrogen status of the cell that GlnD senses through the glutamine level. Under low glutamine levels, catalyzes the conversion of the PII proteins and UTP to PII-UMP and PPi, while under higher glutamine levels, GlnD hydrolyzes PII-UMP to PII and UMP (deuridylylation). Thus, controls uridylylation state and activity of the PII proteins, and plays an important role in the regulation of nitrogen assimilation and metabolism. The protein is Bifunctional uridylyltransferase/uridylyl-removing enzyme of Burkholderia orbicola (strain MC0-3).